Reading from the N-terminus, the 749-residue chain is Soluble starch synthase 2-1, chloroplastic/amyloplastic (749 aa).

The transit peptide at 1-44 (MAAAAVSSLLAPSGSCYSPGCHSCWGPGPGGGRRLPSPRRRPIT) directs the protein to the chloroplast. K272 is a binding site for ADP-alpha-D-glucose.

This sequence belongs to the glycosyltransferase 1 family. Bacterial/plant glycogen synthase subfamily. Expressed in endosperm, leaves, and weakly in roots.

It is found in the plastid. Its subcellular location is the amyloplast. It localises to the chloroplast. It carries out the reaction [(1-&gt;4)-alpha-D-glucosyl](n) + ADP-alpha-D-glucose = [(1-&gt;4)-alpha-D-glucosyl](n+1) + ADP + H(+). The protein operates within glycan biosynthesis; starch biosynthesis. In terms of biological role, may be involved in starch synthesis in endosperm amyloplasts and contribute to the deposition of transient starch in chloroplasts of leaves. This chain is Soluble starch synthase 2-1, chloroplastic/amyloplastic (SSII-1), found in Oryza sativa subsp. japonica (Rice).